A 654-amino-acid polypeptide reads, in one-letter code: uncharacterized protein (654 aa).

Residues methionine 1–threonine 13 show a composition bias toward polar residues. Residues methionine 1–arginine 23 form a disordered region. Positions cysteine 25–cysteine 54 form a DNA-binding region, zn(2)-C6 fungal-type. Residues arginine 63–leucine 96 form a disordered region.

It is found in the cytoplasm. The protein resides in the nucleus. This is an uncharacterized protein from Schizosaccharomyces pombe (strain 972 / ATCC 24843) (Fission yeast).